The chain runs to 349 residues: 5-deoxyribose 1-phosphate isomerase (349 aa).

Substrate is bound by residues 49-51, arginine 92, and glutamine 199; that span reads RGA. The Proton donor role is filled by aspartate 240. Residue 250–251 participates in substrate binding; sequence NK.

The protein belongs to the EIF-2B alpha/beta/delta subunits family. DrdI subfamily.

The enzyme catalyses 5-deoxy-alpha-D-ribose 1-phosphate = 5-deoxy-D-ribulose 1-phosphate. It participates in carbohydrate degradation. Catalyzes the isomerization of 5-deoxy-alpha-D-ribose 1-phosphate to 5-deoxy-D-ribulose 1-phosphate, as part of a 5-deoxyribose salvage pathway that recycles this toxic radical SAM enzyme by-product to mainstream metabolites. The protein is 5-deoxyribose 1-phosphate isomerase of Clostridium botulinum (strain Langeland / NCTC 10281 / Type F).